The primary structure comprises 940 residues: Phosphoenolpyruvate carboxylase (940 aa).

Active-site residues include histidine 138 and lysine 603.

It belongs to the PEPCase type 1 family. The cofactor is Mg(2+).

The catalysed reaction is oxaloacetate + phosphate = phosphoenolpyruvate + hydrogencarbonate. Forms oxaloacetate, a four-carbon dicarboxylic acid source for the tricarboxylic acid cycle. This Streptococcus thermophilus (strain ATCC BAA-491 / LMD-9) protein is Phosphoenolpyruvate carboxylase.